The primary structure comprises 529 residues: Ectonucleoside triphosphate diphosphohydrolase 3 (529 aa).

The Cytoplasmic segment spans residues 1–22 (MFTVMTRQPCEQAGFRALSRTP). A helical membrane pass occupies residues 23-43 (AIVTLVVLLVSIVVLVTLTLI). The Extracellular segment spans residues 44 to 485 (QIRHPQVLPP…PLIHLPIQPP (442 aa)). A glycan (N-linked (GlcNAc...) asparagine) is linked at Asn-81. Cysteines 92 and 116 form a disulfide. Asn-149 carries N-linked (GlcNAc...) asparagine glycosylation. Glu-182 functions as the Proton acceptor in the catalytic mechanism. 222-226 (GASTQ) contributes to the ATP binding site. 3 N-linked (GlcNAc...) asparagine glycosylation sites follow: Asn-238, Asn-284, and Asn-318. Cystine bridges form between Cys-261–Cys-308, Cys-289–Cys-334, and Cys-347–Cys-353. 2 N-linked (GlcNAc...) asparagine glycosylation sites follow: Asn-381 and Asn-392. An intrachain disulfide couples Cys-399 to Cys-422. An N-linked (GlcNAc...) asparagine glycan is attached at Asn-454. A helical transmembrane segment spans residues 486–506 (VFMGVLAFFTAIALLCLAFLL). Residues 507–529 (YLCSSFRTKERSENAFDQAVDSD) are Cytoplasmic-facing.

Belongs to the GDA1/CD39 NTPase family. Ca(2+) serves as cofactor. The cofactor is Mg(2+).

The protein resides in the cell membrane. The enzyme catalyses a ribonucleoside 5'-triphosphate + 2 H2O = a ribonucleoside 5'-phosphate + 2 phosphate + 2 H(+). Its function is as follows. Catalyzes the hydrolysis of nucleoside triphosphates and diphosphates. Has a threefold preference for the hydrolysis of ATP and UTP over ADP and UDP. The polypeptide is Ectonucleoside triphosphate diphosphohydrolase 3 (Mus musculus (Mouse)).